The chain runs to 399 residues: Imidazolonepropionase (399 aa).

Fe(3+) contacts are provided by His68 and His70. Zn(2+) is bound by residues His68 and His70. The 4-imidazolone-5-propanoate site is built by Arg77, Tyr140, and His173. N-formimidoyl-L-glutamate is bound at residue Tyr140. His238 is a binding site for Fe(3+). Zn(2+) is bound at residue His238. Gln241 is a 4-imidazolone-5-propanoate binding site. Residue Asp313 participates in Fe(3+) binding. Residue Asp313 participates in Zn(2+) binding. The N-formimidoyl-L-glutamate site is built by Asn315 and Gly317. Thr318 serves as a coordination point for 4-imidazolone-5-propanoate.

This sequence belongs to the metallo-dependent hydrolases superfamily. HutI family. Zn(2+) serves as cofactor. The cofactor is Fe(3+).

The protein resides in the cytoplasm. It carries out the reaction 4-imidazolone-5-propanoate + H2O = N-formimidoyl-L-glutamate. Its pathway is amino-acid degradation; L-histidine degradation into L-glutamate; N-formimidoyl-L-glutamate from L-histidine: step 3/3. Its function is as follows. Catalyzes the hydrolytic cleavage of the carbon-nitrogen bond in imidazolone-5-propanoate to yield N-formimidoyl-L-glutamate. It is the third step in the universal histidine degradation pathway. In Rhizorhabdus wittichii (strain DSM 6014 / CCUG 31198 / JCM 15750 / NBRC 105917 / EY 4224 / RW1) (Sphingomonas wittichii), this protein is Imidazolonepropionase.